A 251-amino-acid chain; its full sequence is Ubiquinone/menaquinone biosynthesis C-methyltransferase UbiE (251 aa).

S-adenosyl-L-methionine-binding positions include Thr-74, Asp-95, and 123–124 (NA).

The protein belongs to the class I-like SAM-binding methyltransferase superfamily. MenG/UbiE family.

The catalysed reaction is a 2-demethylmenaquinol + S-adenosyl-L-methionine = a menaquinol + S-adenosyl-L-homocysteine + H(+). The enzyme catalyses a 2-methoxy-6-(all-trans-polyprenyl)benzene-1,4-diol + S-adenosyl-L-methionine = a 5-methoxy-2-methyl-3-(all-trans-polyprenyl)benzene-1,4-diol + S-adenosyl-L-homocysteine + H(+). It participates in quinol/quinone metabolism; menaquinone biosynthesis; menaquinol from 1,4-dihydroxy-2-naphthoate: step 2/2. It functions in the pathway cofactor biosynthesis; ubiquinone biosynthesis. Methyltransferase required for the conversion of demethylmenaquinol (DMKH2) to menaquinol (MKH2) and the conversion of 2-polyprenyl-6-methoxy-1,4-benzoquinol (DDMQH2) to 2-polyprenyl-3-methyl-6-methoxy-1,4-benzoquinol (DMQH2). This Shewanella sediminis (strain HAW-EB3) protein is Ubiquinone/menaquinone biosynthesis C-methyltransferase UbiE.